A 315-amino-acid polypeptide reads, in one-letter code: Eukaryotic translation initiation factor 2 subunit 1 (315 aa).

The 72-residue stretch at 17–88 (EDVVMVNVRS…EKGYIDLSKR (72 aa)) folds into the S1 motif domain. A Phosphoserine; by HRI modification is found at serine 49. Serine 52 is subject to Phosphoserine. N6-acetyllysine is present on lysine 141. Residue serine 158 is modified to Phosphoserine. A phosphothreonine mark is found at threonine 279 and threonine 281. The segment at 293–315 (LERENAEVDGDDDAEEMEAKAED) is disordered. The span at 299–308 (EVDGDDDAEE) shows a compositional bias: acidic residues.

Belongs to the eIF-2-alpha family. In terms of assembly, eukaryotic translation initiation factor 2 eIF2 is a heterotrimeric complex composed of an alpha (EIF2S1), a beta (EIF2S2) and a gamma (EIF2S3) chain. eIF2 is member of the 43S pre-initiation complex (43S PIC). eIF2 forms a complex with at least CELF1/CUGBP1, CALR, CALR3, EIF2S1, EIF2S2, HSP90B1 and HSPA5. Interaction with METAP2 protects EIF2S1 from inhibitory phosphorylation. Interacts with ABCF1 isoform 2. Associates with ribosomes. Interacts with DDX3X in an RNA-independent manner. Interacts with CDC123. As to quaternary structure, (Microbial infection) Interacts with rotavirus A non-structural protein 2; this interaction probably plays a role in the sequestration of IF2A in viral factories. Interacts with rotavirus A non-structural protein 5; this interaction probably plays a role in its sequestration in viral factories. Post-translationally, phosphorylation at Ser-49 and Ser-52 stabilizes the eIF-2/GDP/eIF2B complex and prevents GDP/GTP exchange reaction, thus impairing the recycling of eIF-2 between successive rounds of initiation and leading to global inhibition of translation, while concomitantly initiating the preferential translation of integrated stress response (ISR)-specific mRNAs. Substrate for at least 4 kinases: EIF2AK1/HRI, EIF2AK2/PKR, EIF2AK3/PERK and EIF2AK4/GCN2. Phosphorylation on Ser-52 by the EIF2AK4/GCN2 protein kinase occurs in response to amino acid starvation and UV irradiation. Phosphorylation at Ser-52 by the EIF2AK3/PERK protein kinase occurs in response to the unfolded protein response. Phosphorylation at Ser-52 by EIF2AK1/HRI in response to mitochondrial damage promotes relocalization to the mitochondrial surface. In terms of processing, (Microbial infection) Phosphorylation by vaccinia virus protein E3 and rotavirus A stabilizes the eIF-2/GDP/eIF2B complex and prevents GDP/GTP exchange reaction, thus impairing the recycling of eIF-2 between successive rounds of initiation and leading to global inhibition of translation.

The protein resides in the cytoplasm. The protein localises to the stress granule. Its subcellular location is the cytosol. It is found in the mitochondrion. Its activity is regulated as follows. Activity is regulated by phosphorylation at Ser-49 and Ser-52, which stabilizes the eIF2/GDP/eIF2B complex and prevents the eIF2B-mediated exchange of GDP for GTP, thereby preventing the formation of the 43S pre-initiation complex (43S PIC). This results in the global attenuation of 5' cap-dependent protein synthesis and concomitant translation of ISR-specific mRNAs that contain a short upstream open reading frame (uORF) in their 5' UTR, such as ATF4, ATF5, DDIT3/CHOP and PPP1R15A/GADD34. Member of the eIF2 complex that functions in the early steps of protein synthesis by forming a ternary complex with GTP and initiator tRNA. This complex binds to a 40S ribosomal subunit, followed by mRNA binding to form a 43S pre-initiation complex (43S PIC). Junction of the 60S ribosomal subunit to form the 80S initiation complex is preceded by hydrolysis of the GTP bound to eIF2 and release of an eIF2-GDP binary complex. In order for eIF2 to recycle and catalyze another round of initiation, the GDP bound to eIF2 must exchange with GTP by way of a reaction catalyzed by eIF2B. EIF2S1/eIF2-alpha is a key component of the integrated stress response (ISR), required for adaptation to various stress: phosphorylation by metabolic-stress sensing protein kinases (EIF2AK1/HRI, EIF2AK2/PKR, EIF2AK3/PERK and EIF2AK4/GCN2) in response to stress converts EIF2S1/eIF2-alpha in a global protein synthesis inhibitor, leading to an attenuation of cap-dependent translation, while concomitantly initiating the preferential translation of ISR-specific mRNAs, such as the transcriptional activators ATF4 and QRICH1, and hence allowing ATF4- and QRICH1-mediated reprogramming. EIF2S1/eIF2-alpha also acts as an activator of mitophagy in response to mitochondrial damage: phosphorylation by EIF2AK1/HRI promotes relocalization to the mitochondrial surface, thereby triggering PRKN-independent mitophagy. In Homo sapiens (Human), this protein is Eukaryotic translation initiation factor 2 subunit 1.